A 78-amino-acid chain; its full sequence is MSRVCQLTGTRANNGMAVSHSHIRTKKLQQANLQNRRLWWAEGKRWVNLRVTTRALKTIQKKGLGPYAKSLGINLAKL.

Belongs to the bacterial ribosomal protein bL28 family.

The chain is Large ribosomal subunit protein bL28 from Parasynechococcus marenigrum (strain WH8102).